A 468-amino-acid polypeptide reads, in one-letter code: Adenosylhomocysteinase (468 aa).

Substrate contacts are provided by threonine 57, aspartate 132, and glutamate 194. 195 to 197 (TTT) is an NAD(+) binding site. Residues lysine 224 and aspartate 228 each contribute to the substrate site. NAD(+)-binding positions include asparagine 229, 258 to 263 (GFGDVG), glutamate 281, asparagine 316, 337 to 339 (IGH), and asparagine 382.

It belongs to the adenosylhomocysteinase family. It depends on NAD(+) as a cofactor.

It is found in the cytoplasm. It catalyses the reaction S-adenosyl-L-homocysteine + H2O = L-homocysteine + adenosine. It participates in amino-acid biosynthesis; L-homocysteine biosynthesis; L-homocysteine from S-adenosyl-L-homocysteine: step 1/1. May play a key role in the regulation of the intracellular concentration of adenosylhomocysteine. The sequence is that of Adenosylhomocysteinase from Methylorubrum extorquens (strain CM4 / NCIMB 13688) (Methylobacterium extorquens).